The chain runs to 670 residues: MAAATTTTTTSSSISFSTKPSPSSSKSPLPISRFSLPFSLNPNKSSSSSRRRGIKSSSPSSISAVLNTTTNVTTTPSPTKPTKPETFISRFAPDQPRKGADILVEALERQGVETVFAYPGGASMEIHQALTRSSSIRNVLPRHEQGGVFAAEGYARSSGKPGICIATSGPGATNLVSGLADALLDSVPLVAITGQVPRRMIGTDAFQETPIVEVTRSITKHNYLVMDVEDIPRIIEEAFFLATSGRPGPVLVDVPKDIQQQLAIPNWEQAMRLPGYMSRMPKPPEDSHLEQIVRLISESKKPVLYVGGGCLNSSDELGRFVELTGIPVASTLMGLGSYPCDDELSLHMLGMHGTVYANYAVEHSDLLLAFGVRFDDRVTGKLEAFASRAKIVHIDIDSAEIGKNKTPHVSVCGDVKLALQGMNKVLENRAEELKLDFGVWRNELNVQKQKFPLSFKTFGEAIPPQYAIKVLDELTDGKAIISTGVGQHQMWAAQFYNYKKPRQWLSSGGLGAMGFGLPAAIGASVANPDAIVVDIDGDGSFIMNVQELATIRVENLPVKVLLLNNQHLGMVMQWEDRFYKANRAHTFLGDPAQEDEIFPNMLLFAAACGIPAARVTKKADLREAIQTMLDTPGPYLLDVICPHQEHVLPMIPSGGTFNDVITEGDGRIKY.

2 stretches are compositionally biased toward low complexity: residues Met-1–Ser-48 and Lys-55–Ser-77. A chloroplast-targeting transit peptide spans Met-1–Lys-55. Residues Met-1 to Asp-94 are disordered. Residue Glu-144 coordinates thiamine diphosphate. Residue Ser-186 coordinates FAD. Gln-207 is a thiamine diphosphate binding site. (R)-imazaquin is bound by residues Lys-220 and Arg-246. Arg-246 contributes to the FAD binding site. Lys-256 is a chlorimuron-ethyl binding site. Residues Gly-308 and Thr-331 to Leu-332 each bind FAD. Cys-340 bears the Cysteine sulfinic acid (-SO2H) mark. Residues Leu-349 to His-352 and Gly-371 to Asp-375 each bind FAD. Asp-376–Arg-377 is a binding site for chlorimuron-ethyl. FAD is bound by residues Asp-395 to Ile-396 and Asp-414 to Val-415. Positions Asp-414–Val-446 form a coiled coil. Thiamine diphosphate is bound at residue Gln-487–His-488. Gly-508–Gly-509 contributes to the FAD binding site. Residues Gly-511–Met-513, Asp-538–Ser-540, and Asn-565–Met-570 each bind thiamine diphosphate. Positions 538, 565, and 567 each coordinate Mg(2+). The chlorimuron-ethyl site is built by Trp-574 and Ser-653.

The protein belongs to the TPP enzyme family. As to quaternary structure, homodimer or homotetramer. The acetolactate synthase complex contains both large catalytic subunits and small regulatory subunits. Homodimer. The acetolactate synthase complex contains 4 homodimers of the large catalytic subunits, and 1 homotetramer of the small regulatory subunits. Requires Mg(2+) as cofactor. The cofactor is FAD. Thiamine diphosphate is required as a cofactor.

The protein resides in the plastid. Its subcellular location is the chloroplast. It carries out the reaction 2 pyruvate + H(+) = (2S)-2-acetolactate + CO2. Its pathway is amino-acid biosynthesis; L-isoleucine biosynthesis; L-isoleucine from 2-oxobutanoate: step 1/4. It participates in amino-acid biosynthesis; L-valine biosynthesis; L-valine from pyruvate: step 1/4. Its activity is regulated as follows. Inhibited by asymmetric aryl disulfides, triazolopyrimidine sulfonanilide compounds, isatin derivatives, and sulfonylurea and imidazolinone herbicides. Insensitive to feed-back inhibition by branched-chain amino acids. Its function is as follows. Catalyzes the formation of acetolactate from pyruvate, the first step in valine and isoleucine biosynthesis. The sequence is that of Acetolactate synthase, chloroplastic (ALS) from Arabidopsis thaliana (Mouse-ear cress).